Consider the following 338-residue polypeptide: Ferrochelatase (338 aa).

Fe cation is bound by residues histidine 189 and glutamate 293.

It belongs to the ferrochelatase family.

It localises to the cytoplasm. The enzyme catalyses heme b + 2 H(+) = protoporphyrin IX + Fe(2+). Its pathway is porphyrin-containing compound metabolism; protoheme biosynthesis; protoheme from protoporphyrin-IX: step 1/1. Functionally, catalyzes the ferrous insertion into protoporphyrin IX. The protein is Ferrochelatase of Azotobacter vinelandii (strain DJ / ATCC BAA-1303).